The chain runs to 71 residues: Alpha-elapitoxin-Nn3a (71 aa).

Intrachain disulfides connect cysteine 3–cysteine 20, cysteine 14–cysteine 42, cysteine 26–cysteine 30, cysteine 46–cysteine 56, and cysteine 57–cysteine 62.

This sequence belongs to the three-finger toxin family. Long-chain subfamily. Type II alpha-neurotoxin sub-subfamily. As to expression, expressed by the venom gland.

Its subcellular location is the secreted. In terms of biological role, nicotinic acetylcholine receptor antagonist. Binds to muscle nicotinic acetylcholine receptor (nAChR) and inhibits acetylcholine from binding to the receptor, thereby impairing neuromuscular transmission. Produces peripheral paralysis by blocking neuromuscular transmission at the postsynaptic site. Induces concentration-dependent inhibition of indirect twitches and abolishes contractile responses of tissues to exogenous acetylcholine and carbachol, in the chick biventer cervicis nerve-muscle preparation at 100-300 nM (in vitro). Prior incubation of tissues with Indian polyvalent antivenom (1 ml/0.6 mg) prevents the neurotoxic effects at 100 nM (in vitro). Addition of Indian polyvalent antivenom (1 ml/0.6 mg) at the t90 time point partially restores the neurotoxic effects (in vitro). Displays a reversible antagonism of concentration-response curves to carbachol, with a pA2 of 8.17 (in vitro). The chain is Alpha-elapitoxin-Nn3a from Naja naja (Indian cobra).